Consider the following 308-residue polypeptide: uncharacterized protein (308 aa).

The next 7 membrane-spanning stretches (helical) occupy residues 10–30, 91–111, 115–135, 178–198, 219–239, 251–271, and 288–308; these read IILL…TNLI, LPTI…VVIL, LGLI…LIGI, VIPM…LGLM, ITVL…VDIL, LIVL…KHSI, and INYT…IAFF.

It to M.jannaschii MJ0871, MJ1556 and MJ1589.

The protein resides in the cell membrane. This is an uncharacterized protein from Methanocaldococcus jannaschii (strain ATCC 43067 / DSM 2661 / JAL-1 / JCM 10045 / NBRC 100440) (Methanococcus jannaschii).